Reading from the N-terminus, the 185-residue chain is Ribosome-recycling factor (185 aa).

This sequence belongs to the RRF family.

The protein localises to the cytoplasm. In terms of biological role, responsible for the release of ribosomes from messenger RNA at the termination of protein biosynthesis. May increase the efficiency of translation by recycling ribosomes from one round of translation to another. The polypeptide is Ribosome-recycling factor (Pelobacter propionicus (strain DSM 2379 / NBRC 103807 / OttBd1)).